The primary structure comprises 440 residues: Trigger factor (440 aa).

Positions 161–257 (GDYVKLAYEG…VLEVRERVLP (97 aa)) constitute a PPIase FKBP-type domain.

This sequence belongs to the FKBP-type PPIase family. Tig subfamily.

Its subcellular location is the cytoplasm. The catalysed reaction is [protein]-peptidylproline (omega=180) = [protein]-peptidylproline (omega=0). Its function is as follows. Involved in protein export. Acts as a chaperone by maintaining the newly synthesized protein in an open conformation. Functions as a peptidyl-prolyl cis-trans isomerase. This Opitutus terrae (strain DSM 11246 / JCM 15787 / PB90-1) protein is Trigger factor.